The sequence spans 160 residues: MTNTKGKRRGTRYMFSRPFRKHGVVPLATYMRIYKKGDIVDIKGMGTVQKGMPHKCYHGKTGRVYNVTQHAVGIVVNKQVKGKILAKRINVRIEHIKHSKSRDSFLKRVKENDQKKKEAKEKGTWVQLKRQPAPPREAHFVRTNGKEPELLEPIPYEFMA.

2 stretches are compositionally biased toward basic and acidic residues: residues 112-123 (NDQKKKEAKEKG) and 136-145 (REAHFVRTNG). The tract at residues 112 to 145 (NDQKKKEAKEKGTWVQLKRQPAPPREAHFVRTNG) is disordered.

It belongs to the eukaryotic ribosomal protein eL21 family. Component of the large ribosomal subunit.

Its subcellular location is the cytoplasm. It localises to the cytosol. The protein resides in the endoplasmic reticulum. Its function is as follows. Component of the large ribosomal subunit. The ribosome is a large ribonucleoprotein complex responsible for the synthesis of proteins in the cell. The protein is Large ribosomal subunit protein eL21 (RPL21) of Oryctolagus cuniculus (Rabbit).